A 108-amino-acid polypeptide reads, in one-letter code: Nucleoid-associated protein IL1848 (108 aa).

Disordered regions lie at residues 1 to 26 (MFKGGMGNMMKQAQQMQERMQQAQEE) and 88 to 108 (KERMSEITGGMGLPPGFKMPF). Low complexity predominate over residues 9 to 26 (MMKQAQQMQERMQQAQEE).

This sequence belongs to the YbaB/EbfC family. As to quaternary structure, homodimer.

The protein resides in the cytoplasm. It is found in the nucleoid. Its function is as follows. Binds to DNA and alters its conformation. May be involved in regulation of gene expression, nucleoid organization and DNA protection. The chain is Nucleoid-associated protein IL1848 from Idiomarina loihiensis (strain ATCC BAA-735 / DSM 15497 / L2-TR).